The sequence spans 590 residues: Multidrug and toxin extrusion protein 1 (590 aa).

Residues M1–L59 are Cytoplasmic-facing. A helical transmembrane segment spans residues A60–F80. At C81 to E88 the chain is on the extracellular side. The helical transmembrane segment at L89 to G109 threads the bilayer. Residues L110 to G137 are Cytoplasmic-facing. The helical transmembrane segment at I138–I158 threads the bilayer. Over L159–N167 the chain is Extracellular. The chain crosses the membrane as a helical span at residues V168–M188. Topologically, residues Y189–Q199 are cytoplasmic. The chain crosses the membrane as a helical span at residues G200–V222. The Extracellular portion of the chain corresponds to F223–V231. The chain crosses the membrane as a helical span at residues A232–R254. Over W255–W274 the chain is Cytoplasmic. A helical membrane pass occupies residues G275–T294. The Extracellular segment spans residues Y295–Q313. A helical membrane pass occupies residues S314–A334. Over S335–K351 the chain is Cytoplasmic. A helical membrane pass occupies residues L352–I372. At G373 to Q395 the chain is on the extracellular side. Residues V396–I416 traverse the membrane as a helical segment. Residues V417–N430 lie on the Cytoplasmic side of the membrane. A helical membrane pass occupies residues I431–M451. A topological domain (extracellular) is located at residue G452. Residues I453–I473 traverse the membrane as a helical segment. The Cytoplasmic portion of the chain corresponds to L474–G565. Residues L566–V586 form a helical membrane-spanning segment. The Extracellular segment spans residues R587–R590.

It belongs to the multi antimicrobial extrusion (MATE) (TC 2.A.66.1) family.

The protein resides in the cell membrane. Functionally, solute transporter for tetraethylammonium (TEA), cimetidine, metformin, guanidine, N-methylnicotinamide (NMN) and also the zwitterionic cephalosporin cephalexin. Responsible for the secretion of cationic drugs across the brush border membranes. The chain is Multidrug and toxin extrusion protein 1 (slc47a1) from Danio rerio (Zebrafish).